We begin with the raw amino-acid sequence, 1013 residues long: MVVDFCRRFVARSLCIILMKHFCSSSVSEDLGCRRGDFSRKHYGSVELLISSDADGAIQRAGRFRVENGSSDENATALPGTWRRTDVHLENPEYHTRWYFKYFLGQVHQNYIGNDAEKSPFFLSVTLSDQNNQRVPQYRAILWRKTGTQKICLPYSPTKTLSVKSILSAMNLDKFEKGPREIFHPEIQKDLLVLEEQEGSVNFKFGVLFAKDGQLTDDEMFSNEIGSEPFQKFLNLLGDTITLKGWTGYRGGLDTKNDTTGIHSVYTVYQGHEIMFHVSTMLPYSKENKQQVERKRHIGNDIVTIVFQEGEESSPAFKPSMIRSHFTHIFALVRYNQQNDNYRLKIFSEESVPLFGPPLPTPPVFTDHQEFRDFLLVKLINGEKATLETPTFAQKRRRTLDMLIRSLHQDLMPDLHKNMLNRRSFSDVLPESPKSARKKEEARQAEFVRIGQALKLKSIVRGDAPSSLAASGICKKEPWEPQCFCSNFPHEAVCADPWGQALLVSTDAGVLLVDDDLPSVPVFDRTLPVKQMHVLETLDLLVLRADKGKDARLFVFRLSALQKGLEGKQAGKSRSDCRENKLEKTKGCHLYAINTHHSRELRIVVAIRNKLLLITRKHNKPSGVTSTSLLSPLSESPVEEFQYIREICLSDSPMVMTLVDGPAEESDNLICVAYRHQFDVVNESTGEAFRLHHVEANRVNFVAAIDVYEDGEAGLLLCYNYSCIYKKVCPFNGGSFLVQPSASDFQFCWNQAPYAIVCAFPYLLAFTTDSMEIRLVVNGNLVHTAVVPQLQLVASRSDIYFTATAAVNEVSSGGSSKGASARNSPQTPPGRDTPVFPSSLGEGEIQSKNLYKIPLRNLVGRSIERPLKSPLVSKVITPPTPISVGLAAIPVTHSLSLSRMEIKEIASRTRRELLGLSDEGGPKSEGAPKAKSKPRKRLEESQGGPKPGAVRSSSSDRIPSGSLESASTSEANPEGHSASSDQDPVADREGSPVSGSSPFQLTAFSDEDIIDLK.

Position 45 is a phosphoserine (serine 45). The Rap-GAP domain occupies 191–407 (LLVLEEQEGS…RTLDMLIRSL (217 aa)). Residues serine 426 and serine 432 each carry the phosphoserine modification. One can recognise a CNH domain in the interval 489 to 800 (PHEAVCADPW…QLVASRSDIY (312 aa)). Disordered regions lie at residues 810-842 (VSSG…SLGE) and 913-1013 (LLGL…IDLK). A compositionally biased stretch (low complexity) spans 811–821 (SSGGSSKGASA). A Phosphothreonine modification is found at threonine 827. The segment covering 952-962 (SSSSDRIPSGS) has biased composition (low complexity). Composition is skewed to polar residues over residues 963 to 982 (LESA…SSDQ) and 993 to 1003 (VSGSSPFQLTA).

Belongs to the GARNL3 family.

In Homo sapiens (Human), this protein is GTPase-activating Rap/Ran-GAP domain-like protein 3 (GARNL3).